The primary structure comprises 470 residues: Properdin (470 aa).

The N-terminal stretch at 1–26 (MTAPVQVPQSLLLLLMLLLTLPATGS) is a signal peptide. 7 consecutive TSP type-1 domains span residues 27–75 (DPVL…QACR), 76–133 (SPRW…QCCP), 135–190 (MGGW…QVCP), 192–254 (HGAW…PPCP), 256–312 (AGGW…VPCP), 314–376 (DGEW…QNCI), and 380–463 (KGSW…PACK). 3 disulfide bridges follow: Cys-31–Cys-55, Cys-42–Cys-71, and Cys-56–Cys-74. C-linked (Man) tryptophan glycans are attached at residues Trp-82 and Trp-85. 7 cysteine pairs are disulfide-bonded: Cys-88–Cys-126, Cys-92–Cys-132, Cys-103–Cys-110, Cys-131–Cys-169, Cys-147–Cys-183, Cys-151–Cys-189, and Cys-162–Cys-173. Residues Trp-138, Trp-141, and Trp-144 are each glycosylated (C-linked (Man) tryptophan). An O-linked (Fuc...) threonine glycan is attached at Thr-150. Residues Trp-195, Trp-198, and Trp-201 are each glycosylated (C-linked (Man) tryptophan). Cystine bridges form between Cys-204/Cys-247, Cys-208/Cys-253, and Cys-223/Cys-237. Residue Ser-207 is glycosylated (O-linked (Fuc...) serine). 2 C-linked (Man) tryptophan glycosylation sites follow: Trp-259 and Trp-262. 3 disulfide bridges follow: Cys-268–Cys-305, Cys-272–Cys-311, and Cys-283–Cys-295. Thr-271 is a glycosylation site (O-linked (Fuc...) threonine). C-linked (Man) tryptophan glycans are attached at residues Trp-320 and Trp-323. 3 cysteine pairs are disulfide-bonded: Cys-326–Cys-369, Cys-336–Cys-375, and Cys-349–Cys-359. The segment at 350–358 (KGRKFNGQR) is interaction with Complement C3 beta chain. Trp-383, Trp-386, and Trp-389 each carry a C-linked (Man) tryptophan glycan. 3 cysteine pairs are disulfide-bonded: Cys-392-Cys-456, Cys-396-Cys-462, and Cys-408-Cys-440. N-linked (GlcNAc...) asparagine glycosylation occurs at Asn-429.

In plasma, properdin exists as dimers, trimers or tetramers in the relative proportions of 26:54:20. Interacts with the pro-C3-convertase enzyme complex (C3b-Bb) comprised of Complement C3 beta chain (C3b) and the Complement factor B Bb fragment (Bb), where it binds (via its TSP type-1 5 domain) with C3b and Bb. This interaction stabilizes the complex and allows it to become the active C3-convertase enzyme complex (C3b-Bb-FP). Interacts with C3b. Interacts with CFB.

The protein resides in the secreted. Its function is as follows. A positive regulator of the alternate pathway of complement. It binds to and stabilizes the C3- and C5-convertase enzyme complexes. Inhibits CFI-CFH mediated degradation of Inhibits CFI-CFH mediated degradation of Complement C3 beta chain (C3b). The chain is Properdin (CFP) from Cavia porcellus (Guinea pig).